A 463-amino-acid polypeptide reads, in one-letter code: Heterogeneous nuclear ribonucleoprotein K (463 aa).

Met-1 is subject to N-acetylmethionine. The segment at 1–37 is disordered; it reads METEQPEETFPNTETNGEFGKRPAEDMEEEQAFKRSR. The necessary for interaction with DDX1 stretch occupies residues 1–276; it reads METEQPEETF…GRGGRPMPPS (276 aa). Over residues 19–37 the composition is skewed to basic and acidic residues; that stretch reads FGKRPAEDMEEEQAFKRSR. An N6-acetyllysine; alternate modification is found at Lys-34. Residue Lys-34 forms a Glycyl lysine isopeptide (Lys-Gly) (interchain with G-Cter in SUMO1); alternate linkage. A Glycyl lysine isopeptide (Lys-Gly) (interchain with G-Cter in SUMO2); alternate cross-link involves residue Lys-34. Ser-36 carries the phosphoserine modification. Thr-39 bears the Phosphothreonine mark. In terms of domain architecture, KH 1 spans 42–104; sequence MVELRILLQS…ETIGEILKKI (63 aa). Residues Lys-52 and Lys-60 each participate in a glycyl lysine isopeptide (Lys-Gly) (interchain with G-Cter in SUMO2) cross-link. Repeat copies occupy residues 54 to 76 and 59 to 62. Residues 54 to 421 are 2 X 22 AA approximate repeats; sequence AGAVIGKGGK…QIRHESGASI (368 aa). Positions 59–407 are 5 X 4 AA repeats of G-X-G-G; sequence GKGGKNIKAL…LAGSIIGKGG (349 aa). Phosphoserine occurs at positions 75 and 116. A KH 2 domain is found at 144-209; that stretch reads DCELRLLIHQ…DRVVECIKII (66 aa). A Glycyl lysine isopeptide (Lys-Gly) (interchain with G-Cter in SUMO1); alternate cross-link involves residue Lys-163. Lys-163 participates in a covalent cross-link: Glycyl lysine isopeptide (Lys-Gly) (interchain with G-Cter in SUMO2); alternate. Lys-198 carries the N6-acetyllysine modification. The interval 209–337 is interaction with ZIK1; the sequence is ILDLISESPI…RPGDRYDGMV (129 aa). Phosphoserine is present on residues Ser-214 and Ser-216. Lys-219 participates in a covalent cross-link: Glycyl lysine isopeptide (Lys-Gly) (interchain with G-Cter in SUMO2); alternate. At Lys-219 the chain carries N6-succinyllysine; alternate. The RNA-binding RGG-box stretch occupies residues 236–273; the sequence is YGGFTMMFDDRRGRPVGFPMRGRGGFDRMPPGRGGRPM. Repeat copies occupy residues 245–250, 257–260, and 267–270. The tract at residues 245–329 is 2 X 6 AA repeats of D-R-R-G-R-P; the sequence is DRRGRPVGFP…LMAYDRRGRP (85 aa). Residues 250 to 329 are disordered; the sequence is PVGFPMRGRG…LMAYDRRGRP (80 aa). The span at 252–266 shows a compositional bias: low complexity; the sequence is GFPMRGRGGFDRMPP. Residues 276-285 are compositionally biased toward basic and acidic residues; sequence SRRDYDDMSP. At Ser-284 the chain carries Phosphoserine. Residues 295 to 298 form a 3-4 repeat; sequence GRGG. The residue at position 316 (Arg-316) is an Omega-N-methylarginine. The 2-2 repeat unit spans residues 324-329; that stretch reads DRRGRP. The residue at position 377 (Arg-377) is an Omega-N-methylarginine. A Phosphoserine modification is found at Ser-379. Residue Tyr-380 is modified to Phosphotyrosine. The region spanning 387 to 451 is the KH 3 domain; the sequence is IITTQVTIPK…DQIQNAQYLL (65 aa). 2 consecutive repeat copies span residues 399–421 and 404–407. Residue Lys-405 is modified to N6-acetyllysine; alternate. A Glycyl lysine isopeptide (Lys-Gly) (interchain with G-Cter in SUMO2); alternate cross-link involves residue Lys-405. At Ser-420 the chain carries Phosphoserine. Residue Lys-422 forms a Glycyl lysine isopeptide (Lys-Gly) (interchain with G-Cter in SUMO1); alternate linkage. Residue Lys-422 forms a Glycyl lysine isopeptide (Lys-Gly) (interchain with G-Cter in SUMO2); alternate linkage. Residue Lys-422 forms a Glycyl lysine isopeptide (Lys-Gly) (interchain with G-Cter in SUMO); alternate linkage.

Identified in the spliceosome C complex. Interacts with ANKRD28, RBM42 and ZIK1. Interacts with DDX1. Interacts with MDM2; this interaction leads to ubiquitination and proteasomal degradation. Interacts with p53/TP53. Interacts with BRDT. Interacts with IVNS1ABP. Interacts with PPIA/CYPA. Part of a transcription inhibitory ribonucleoprotein complex composed at least of the circular RNA circZNF827, ZNF827 and HNRNPL. Post-translationally, sumoylated by CBX4. Sumoylation is increased upon DNA damage, such as that produced by doxorubicin, etoposide, UV light and camptothecin, due to enhanced CBX4 phosphorylation by HIPK2 under these conditions. In terms of processing, ubiquitinated by MDM2. Doxorubicin treatment does not affect monoubiquitination, but slightly decreases HNRNPK poly-ubiquitination. O-glycosylated (O-GlcNAcylated), in a cell cycle-dependent manner.

The protein localises to the cytoplasm. The protein resides in the nucleus. It localises to the nucleoplasm. It is found in the cell projection. Its subcellular location is the podosome. One of the major pre-mRNA-binding proteins. Binds tenaciously to poly(C) sequences. Likely to play a role in the nuclear metabolism of hnRNAs, particularly for pre-mRNAs that contain cytidine-rich sequences. Can also bind poly(C) single-stranded DNA. Plays an important role in p53/TP53 response to DNA damage, acting at the level of both transcription activation and repression. When sumoylated, acts as a transcriptional coactivator of p53/TP53, playing a role in p21/CDKN1A and 14-3-3 sigma/SFN induction. As far as transcription repression is concerned, acts by interacting with long intergenic RNA p21 (lincRNA-p21), a non-coding RNA induced by p53/TP53. This interaction is necessary for the induction of apoptosis, but not cell cycle arrest. As part of a ribonucleoprotein complex composed at least of ZNF827, HNRNPL and the circular RNA circZNF827 that nucleates the complex on chromatin, may negatively regulate the transcription of genes involved in neuronal differentiation. In Oryctolagus cuniculus (Rabbit), this protein is Heterogeneous nuclear ribonucleoprotein K (HNRNPK).